Consider the following 494-residue polypeptide: MNNSVDFGGRPFHFIGIGGIGMSALAYVLAKRQLPVSGSDLRPNHITRKLESIGTHIFSRQEASNLEFFGSKVSSTEIELNTQEMFPVGKSTLPQVVCSTAINSNNLEYQAAIELGCPILHRSDVLAALINDYHSVAVAGTHGKTTTSSMIGYMLLEAGLDPTIIVGGEVNAWEGNARLGQSSYLVAEADESDGSLVKHAPEIGIITNIELDHPDHYDTLEEVVDIFQTFAKGCKTLIGSVDCETVRELLRNASGDRQQPTITYSLHQDTEADYTVTNIDYRADGTTALVWEKGKALGVLKLKLLSRHNLSNALAAVAVGRLVGLEFGEIAKGIAGFEGARRRFEFRGEVDGITFIDDYAHHPSEIRATLAAARLQARPGQRVVAIFQPHRYSRTLTFLEEFSESFSHADLVVLTDIYSAGEPNLGLISGENLAEKIAQEHPQVVYQPTLSTVCEYLLKNLRPGDLALFLGAGNLNQAIPEIITTLCAPATATL.

140 to 146 contributes to the ATP binding site; it reads GTHGKTT.

The protein belongs to the MurCDEF family.

Its subcellular location is the cytoplasm. The enzyme catalyses UDP-N-acetyl-alpha-D-muramate + L-alanine + ATP = UDP-N-acetyl-alpha-D-muramoyl-L-alanine + ADP + phosphate + H(+). Its pathway is cell wall biogenesis; peptidoglycan biosynthesis. Functionally, cell wall formation. The polypeptide is UDP-N-acetylmuramate--L-alanine ligase (Nostoc sp. (strain PCC 7120 / SAG 25.82 / UTEX 2576)).